An 809-amino-acid polypeptide reads, in one-letter code: Leucine--tRNA ligase (809 aa).

Residues 40 to 51 (PYPSGQGLHVGH) carry the 'HIGH' region motif. Positions 581–585 (KMSKS) match the 'KMSKS' region motif. Lys-584 serves as a coordination point for ATP.

Belongs to the class-I aminoacyl-tRNA synthetase family.

It is found in the cytoplasm. The catalysed reaction is tRNA(Leu) + L-leucine + ATP = L-leucyl-tRNA(Leu) + AMP + diphosphate. The sequence is that of Leucine--tRNA ligase from Levilactobacillus brevis (strain ATCC 367 / BCRC 12310 / CIP 105137 / JCM 1170 / LMG 11437 / NCIMB 947 / NCTC 947) (Lactobacillus brevis).